The chain runs to 198 residues: Putative pseudouridine methyltransferase (198 aa).

Residues leucine 132 and cysteine 186 each coordinate S-adenosyl-L-methionine.

This sequence belongs to the methyltransferase superfamily. TrmY family.

The protein resides in the cytoplasm. This Shewanella frigidimarina (strain NCIMB 400) protein is Putative pseudouridine methyltransferase.